A 96-amino-acid chain; its full sequence is Large ribosomal subunit protein uL23 (96 aa).

The protein belongs to the universal ribosomal protein uL23 family. As to quaternary structure, part of the 50S ribosomal subunit. Contacts protein L29, and trigger factor when it is bound to the ribosome.

Its function is as follows. One of the early assembly proteins it binds 23S rRNA. One of the proteins that surrounds the polypeptide exit tunnel on the outside of the ribosome. Forms the main docking site for trigger factor binding to the ribosome. This chain is Large ribosomal subunit protein uL23, found in Caldicellulosiruptor saccharolyticus (strain ATCC 43494 / DSM 8903 / Tp8T 6331).